The following is a 173-amino-acid chain: Ribosome maturation factor RimM (173 aa).

The PRC barrel domain occupies 96-169; the sequence is PDEYYDHQLE…LVEIDPPEGL (74 aa).

It belongs to the RimM family. As to quaternary structure, binds ribosomal protein uS19.

The protein resides in the cytoplasm. An accessory protein needed during the final step in the assembly of 30S ribosomal subunit, possibly for assembly of the head region. Essential for efficient processing of 16S rRNA. May be needed both before and after RbfA during the maturation of 16S rRNA. It has affinity for free ribosomal 30S subunits but not for 70S ribosomes. The chain is Ribosome maturation factor RimM from Mycobacterium sp. (strain JLS).